Here is a 46-residue protein sequence, read N- to C-terminus: Large ribosomal subunit protein bL34 (46 aa).

The protein belongs to the bacterial ribosomal protein bL34 family.

The polypeptide is Large ribosomal subunit protein bL34 (Trichodesmium erythraeum (strain IMS101)).